A 154-amino-acid polypeptide reads, in one-letter code: Large ribosomal subunit protein uL13 (154 aa).

The tract at residues 132–154 (PHEAQQPETLDVGAMNRKNKRAA) is disordered.

Belongs to the universal ribosomal protein uL13 family. In terms of assembly, part of the 50S ribosomal subunit.

In terms of biological role, this protein is one of the early assembly proteins of the 50S ribosomal subunit, although it is not seen to bind rRNA by itself. It is important during the early stages of 50S assembly. The polypeptide is Large ribosomal subunit protein uL13 (Rhodopseudomonas palustris (strain HaA2)).